The following is an 83-amino-acid chain: U25-theraphotoxin-Cg1b (83 aa).

The signal sequence occupies residues 1–23 (MRFHTLLFLSFLLLVSCALICTA). A propeptide spanning residues 24 to 48 (QHPGLEKSGMFHENVGKGQHIEEKR) is cleaved from the precursor. Disulfide bonds link Cys-50–Cys-66, Cys-57–Cys-71, and Cys-65–Cys-79.

The protein belongs to the neurotoxin 07 (Beta/delta-agtx) family. 03 (aga-4) subfamily. JZTX sub-subfamily. In terms of tissue distribution, expressed by the venom gland.

Its subcellular location is the secreted. Functionally, probable ion channel inhibitor. This Chilobrachys guangxiensis (Chinese earth tiger tarantula) protein is U25-theraphotoxin-Cg1b.